The following is a 261-amino-acid chain: Adenosylcobinamide-GDP ribazoletransferase (261 aa).

The next 7 membrane-spanning stretches (helical) occupy residues 9 to 29, 41 to 61, 64 to 84, 114 to 134, 141 to 161, 196 to 216, and 235 to 255; these read LELF…VSLP, YFAL…SLAT, FSTN…TGAF, IGTY…LLLT, SLVP…ASLI, ATLL…SLIF, and CLGA…LAFL.

It belongs to the CobS family. The cofactor is Mg(2+).

Its subcellular location is the cell inner membrane. The enzyme catalyses alpha-ribazole + adenosylcob(III)inamide-GDP = adenosylcob(III)alamin + GMP + H(+). The catalysed reaction is alpha-ribazole 5'-phosphate + adenosylcob(III)inamide-GDP = adenosylcob(III)alamin 5'-phosphate + GMP + H(+). It participates in cofactor biosynthesis; adenosylcobalamin biosynthesis; adenosylcobalamin from cob(II)yrinate a,c-diamide: step 7/7. Joins adenosylcobinamide-GDP and alpha-ribazole to generate adenosylcobalamin (Ado-cobalamin). Also synthesizes adenosylcobalamin 5'-phosphate from adenosylcobinamide-GDP and alpha-ribazole 5'-phosphate. In Vibrio cholerae serotype O1 (strain ATCC 39541 / Classical Ogawa 395 / O395), this protein is Adenosylcobinamide-GDP ribazoletransferase.